A 647-amino-acid polypeptide reads, in one-letter code: 1-deoxy-D-xylulose-5-phosphate synthase (647 aa).

Residues histidine 88 and 129 to 131 (GHA) each bind thiamine diphosphate. Aspartate 160 serves as a coordination point for Mg(2+). Thiamine diphosphate is bound by residues 161-162 (GA), asparagine 189, tyrosine 300, and glutamate 377. Asparagine 189 lines the Mg(2+) pocket.

Belongs to the transketolase family. DXPS subfamily. As to quaternary structure, homodimer. It depends on Mg(2+) as a cofactor. Requires thiamine diphosphate as cofactor.

The catalysed reaction is D-glyceraldehyde 3-phosphate + pyruvate + H(+) = 1-deoxy-D-xylulose 5-phosphate + CO2. It participates in metabolic intermediate biosynthesis; 1-deoxy-D-xylulose 5-phosphate biosynthesis; 1-deoxy-D-xylulose 5-phosphate from D-glyceraldehyde 3-phosphate and pyruvate: step 1/1. Catalyzes the acyloin condensation reaction between C atoms 2 and 3 of pyruvate and glyceraldehyde 3-phosphate to yield 1-deoxy-D-xylulose-5-phosphate (DXP). The polypeptide is 1-deoxy-D-xylulose-5-phosphate synthase (Dehalococcoides mccartyi (strain ATCC BAA-2266 / KCTC 15142 / 195) (Dehalococcoides ethenogenes (strain 195))).